The following is a 188-amino-acid chain: Preprocaerulein type-1 (188 aa).

Positions 1-26 are cleaved as a signal peptide; that stretch reads MFKGILLCVLFAVLSANPLSQPEGFA. Residues 27–170 constitute a propeptide that is removed on maturation; it reads DEERDVRGLA…ANDERRFADG (144 aa). The interval 152–188 is disordered; that stretch reads LGGSPQQREANDERRFADGQQDYTGWMDFGRRNGEDD. The residue at position 174 (Tyr174) is a Sulfotyrosine. At Phe180 the chain carries Phenylalanine amide. Residues 184–188 constitute a propeptide that is removed on maturation; the sequence is NGEDD.

Belongs to the gastrin/cholecystokinin family. In terms of tissue distribution, expressed by the skin glands.

It is found in the secreted. Its function is as follows. The pharmacological activities of caerulein are quite similar to the physiological activities of gastrin and related peptides. This is Preprocaerulein type-1 from Xenopus laevis (African clawed frog).